The chain runs to 172 residues: WW domain binding protein VOPP1 (172 aa).

The N-terminal stretch at 1–22 is a signal peptide; the sequence is MRRQPAKVAALLLGLLLECTEA. Over 23–60 the chain is Extracellular; the sequence is KKHCWYFEGLYPTYYICRSYEDCCGSRCCVRALSIQRL. Residues 61–81 traverse the membrane as a helical segment; sequence WYFWFLLMMGVLFCCGAGFFI. At 82–172 the chain is on the cytoplasmic side; it reads RRRMYPPPLI…PPYEQVVKAK (91 aa). Residues 102-153 form a disordered region; it reads RQPPNPGPGAQQPGPPYYTDPGGPGMNPVGNSMAMAFQVPPNSPQGSVACPP. Over residues 104-119 the composition is skewed to pro residues; it reads PPNPGPGAQQPGPPYY.

The protein belongs to the VOPP1/ECOP family. In terms of assembly, interacts with WWOX (via WW domain). Widely expressed with highest levels in thymus and ovary.

The protein resides in the cytoplasmic vesicle membrane. The protein localises to the late endosome membrane. It localises to the lysosome membrane. Its function is as follows. Increases the transcriptional activity of NFKB1 by facilitating its nuclear translocation, DNA-binding and associated apoptotic response, when overexpressed. May sequester WWOX in lysosomal vesicles and thereby regulate WWOX role as tumor suppressor. In Homo sapiens (Human), this protein is WW domain binding protein VOPP1.